Reading from the N-terminus, the 728-residue chain is Catalase-peroxidase 1 (728 aa).

Residues 1-22 (MDKTQSSQGKCPVMHGANSAVA) form the signal peptide. The segment at residues 97–225 (WHSAGTYRVA…LAAVMMGLIY (129 aa)) is a cross-link (tryptophyl-tyrosyl-methioninium (Trp-Tyr) (with M-251)). H98 acts as the Proton acceptor in catalysis. Residues 225 to 251 (YVNPEGVDGKPDPLRTAQDVRVTFARM) constitute a cross-link (tryptophyl-tyrosyl-methioninium (Tyr-Met) (with W-97)). H266 lines the heme b pocket.

This sequence belongs to the peroxidase family. Peroxidase/catalase subfamily. Homodimer or homotetramer. Heme b is required as a cofactor. Post-translationally, formation of the three residue Trp-Tyr-Met cross-link is important for the catalase, but not the peroxidase activity of the enzyme.

It catalyses the reaction H2O2 + AH2 = A + 2 H2O. It carries out the reaction 2 H2O2 = O2 + 2 H2O. Bifunctional enzyme with both catalase and broad-spectrum peroxidase activity. In Shewanella sp. (strain MR-7), this protein is Catalase-peroxidase 1.